Consider the following 33-residue polypeptide: Brevinin-2HSb (33 aa).

A disulfide bridge links Cys27 with Cys33.

As to expression, expressed by the skin glands.

It localises to the secreted. Its function is as follows. Has antibacterial activity against the Gram-positive bacterium S.aureus ATCC 25923 and the Gram-negative bacterium E.coli ATCC 25726. In Odorrana hosii (Hose's rock frog), this protein is Brevinin-2HSb.